The primary structure comprises 164 residues: NADH-quinone oxidoreductase subunit I 1 (164 aa).

4Fe-4S ferredoxin-type domains are found at residues 54-84 and 95-124; these read LRRYPNGEERCIACKLCEAICPAQAITIEAG and VRYDIDMVKCIYCGFCQEACPVDAIVEGPN. Residues cysteine 64, cysteine 67, cysteine 70, cysteine 74, cysteine 104, cysteine 107, cysteine 110, and cysteine 114 each contribute to the [4Fe-4S] cluster site.

This sequence belongs to the complex I 23 kDa subunit family. As to quaternary structure, NDH-1 is composed of 14 different subunits. Subunits NuoA, H, J, K, L, M, N constitute the membrane sector of the complex. Requires [4Fe-4S] cluster as cofactor.

It localises to the cell inner membrane. It catalyses the reaction a quinone + NADH + 5 H(+)(in) = a quinol + NAD(+) + 4 H(+)(out). Functionally, NDH-1 shuttles electrons from NADH, via FMN and iron-sulfur (Fe-S) centers, to quinones in the respiratory chain. The immediate electron acceptor for the enzyme in this species is believed to be ubiquinone. Couples the redox reaction to proton translocation (for every two electrons transferred, four hydrogen ions are translocated across the cytoplasmic membrane), and thus conserves the redox energy in a proton gradient. The sequence is that of NADH-quinone oxidoreductase subunit I 1 from Rhizobium meliloti (strain 1021) (Ensifer meliloti).